Reading from the N-terminus, the 117-residue chain is Anti-adapter protein IraM (117 aa).

It belongs to the IraM/RssC family.

The protein resides in the cytoplasm. Involved in the stabilization of the sigma stress factor RpoS. This is Anti-adapter protein IraM from Klebsiella pneumoniae (strain 342).